We begin with the raw amino-acid sequence, 1499 residues long: Streptococcal surface protein B (1499 aa).

The signal sequence occupies residues 1–37; that stretch reads MQKREVFGFRKSKVAKTLCGAVLGAALIAIADQQVLA. The segment at 50-84 is disordered; that stretch reads AVTTTGNPATNLPEAQGEATEAASQSQAQAGSKDG. Ag I/II A repeat units lie at residues 145–219, 220–301, 302–383, and 384–465; these read KKTT…QKAN, EDSQ…KKAK, EDND…KQAN, and ATNE…KKDF. Disordered stretches follow at residues 689–709, 763–907, and 1409–1472; these read YADS…SEWD, TAPT…TPPV, and RTTT…TGTN. The segment covering 694–705 has biased composition (basic and acidic residues); the sequence is NAEKSRGARWDT. Pro residues predominate over residues 789–799; sequence PTPPVKTPDQP. A compositionally biased stretch (basic and acidic residues) spans 800–815; sequence EPSKPEEPTYETEKPL. Pro residues predominate over residues 828–838; that stretch reads PTPPVKIPDQP. The segment covering 839 to 854 has biased composition (basic and acidic residues); the sequence is EPSKPEEPTYETEKPL. Composition is skewed to pro residues over residues 867–877 and 888–907; these read PTPPVKTPDQP and DPLP…TPPV. Basic and acidic residues predominate over residues 1428-1450; the sequence is KPKDPDKPETPKEPKVPSPKVED. An LPXTG sorting signal motif is present at residues 1466–1470; sequence LPKTG. T1469 carries the pentaglycyl murein peptidoglycan amidated threonine modification. Positions 1470-1499 are cleaved as a propeptide — removed by sortase; the sequence is GTNDATYMPYLGLAALVGFLGLGLAKRKED.

It belongs to the antigen I/II family.

The protein resides in the secreted. Its subcellular location is the cell wall. The protein localises to the cell surface. Functionally, adhesin that mediates binding of bacteria to a variety of host cells. Plays a role in the bacterial invasion of dentinal tubules. A host immunostimulatory component, it modulates the innate immunity response. Plays a protective role against some antibiotics and cationic antimicrobial peptides (histatin-5, HTN3, but not beta-defensin 4A, DEFB4A). In Streptococcus gordonii (strain Challis / ATCC 35105 / BCRC 15272 / CH1 / DL1 / V288), this protein is Streptococcal surface protein B.